Reading from the N-terminus, the 294-residue chain is Cytidine deaminase (294 aa).

2 CMP/dCMP-type deaminase domains span residues 48–168 (DEDA…FGPK) and 186–294 (LTGD…VLLG). 89–91 (NME) serves as a coordination point for substrate. Residue His102 participates in Zn(2+) binding. Catalysis depends on Glu104, which acts as the Proton donor. Zn(2+) contacts are provided by Cys129 and Cys132.

The protein belongs to the cytidine and deoxycytidylate deaminase family. Homodimer. The cofactor is Zn(2+).

The enzyme catalyses cytidine + H2O + H(+) = uridine + NH4(+). It carries out the reaction 2'-deoxycytidine + H2O + H(+) = 2'-deoxyuridine + NH4(+). Functionally, this enzyme scavenges exogenous and endogenous cytidine and 2'-deoxycytidine for UMP synthesis. This Salmonella arizonae (strain ATCC BAA-731 / CDC346-86 / RSK2980) protein is Cytidine deaminase.